Reading from the N-terminus, the 520-residue chain is GMP synthase [glutamine-hydrolyzing] (520 aa).

The 194-residue stretch at 12–205 (KIIVLDYGSQ…AISICGARGD (194 aa)) folds into the Glutamine amidotransferase type-1 domain. The active-site Nucleophile is Cys89. Residues His179 and Glu181 contribute to the active site. The GMPS ATP-PPase domain occupies 206–395 (WSMDNFIDME…LGMPEEIVWR (190 aa)). Residue 233–239 (SGGVDSS) coordinates ATP.

Homodimer.

It carries out the reaction XMP + L-glutamine + ATP + H2O = GMP + L-glutamate + AMP + diphosphate + 2 H(+). Its pathway is purine metabolism; GMP biosynthesis; GMP from XMP (L-Gln route): step 1/1. Its function is as follows. Catalyzes the synthesis of GMP from XMP. This chain is GMP synthase [glutamine-hydrolyzing], found in Streptococcus pyogenes serotype M2 (strain MGAS10270).